The sequence spans 314 residues: Probable cell division protein WhiA (314 aa).

A DNA-binding region (H-T-H motif) is located at residues 274-308 (SLKELGEMMSTGKISKSGVNHRLRKLNEMADKLRS).

The protein belongs to the WhiA family.

Functionally, involved in cell division and chromosome segregation. This is Probable cell division protein WhiA from Staphylococcus saprophyticus subsp. saprophyticus (strain ATCC 15305 / DSM 20229 / NCIMB 8711 / NCTC 7292 / S-41).